The chain runs to 739 residues: MNYISNQLLSGLNPVQQEAVKTTDGPLLLMAGAGSGKTRVLTHRIAYLMAEKHVAPWNILAITFTNKAAREMKERVESILGPGADDIWISTFHSMCVRILRRDIDRIGINRNFSILDTADQLSVIKGILKERNLDPKKFDPRSILGTISSAKNELTEPEEFSKVAGGYYDQVVSDVYADYQKKLLKNQSLDFDDLIMTTIKLFDRVPEVLEFYQRKFQYIHVDEYQDTNRAQYMLVKQLAERFQNLCVVGDSDQSIYRWRGADITNILSFEKDYPNASVILLEQNYRSTKRILRAANEVIKNNSNRKPKNLWTENDEGIKISYYRGDNEFGEGQFVAGKIHQLHSTGKRKLSDIAILYRTNAQSRVIEETLLKAGLNYNIVGGTKFYDRKEIKDILAYLRLVSNPDDDISFTRIVNVPKRGVGATSLEKIASYAAINGLSFFQAIQQVDFIGVSAKAANALDSFRQMIENLTNMQDYLSITELTEEILDKTEYREMLKAEKSIEAQSRLENIDEFLSVTKNFEQKSEDKTLVAFLTDLALIADIDQLDQKEEESGGKDAITLMTLHAAKGLEFPVVFLMGLEEGVFPHSRSLMEEAEMEEERRLAYVGITRAEQELYLTNAKMRTLFGRTNMNPESRFIAEIPDDLLENLNEKKETRATSARKMQPRRGPVSRPVSYASKTGGDTLNWAVGDKAGHKKWGTGTVVSVKGEGEGTELDIAFPSPVGVKRLLAAFAPIEKQ.

The 280-residue stretch at 10–289 folds into the UvrD-like helicase ATP-binding domain; the sequence is SGLNPVQQEA…ILLEQNYRST (280 aa). ATP is bound by residues 34–39 and Arg-287; that span reads GSGKTR. Residues 290 to 570 form the UvrD-like helicase C-terminal domain; the sequence is KRILRAANEV…TLMTLHAAKG (281 aa). The segment at 655 to 678 is disordered; sequence ETRATSARKMQPRRGPVSRPVSYA.

It belongs to the helicase family. UvrD subfamily. Interacts with YxaL; YwhK and YerB. Interacts with the RNA polymerase core.

It is found in the cytoplasm. The protein localises to the nucleoid. It carries out the reaction Couples ATP hydrolysis with the unwinding of duplex DNA by translocating in the 3'-5' direction.. It catalyses the reaction ATP + H2O = ADP + phosphate + H(+). A DNA helicase/translocase involved in multiple DNA transactions. Probably required for recombinational DNA repair via homologous recombination and for nucleotide excision repair. DNA helicase used for plasmid rolling-circle replication and also involved in UV repair. PcrA depletion leads to chromosome segregation defects. Probably promotes forward RNA polymerase (RNAP) translocation; cells depleted of PcrA may die because they cannot resuscitate replisomes blocked by either a RecA-ssDNA complex and/or stalled RNAP complexes. This is ATP-dependent DNA helicase PcrA (pcrA) from Bacillus subtilis (strain 168).